The primary structure comprises 586 residues: Major facilitator superfamily domain-containing protein 6-like (586 aa).

Helical transmembrane passes span 50-70 (TLMG…AFLA) and 78-98 (ALLI…VLVP). The tract at residues 133-160 (AQESASSHPAKRTAEVEMPGFRNPPGES) is disordered. Transmembrane regions (helical) follow at residues 246-266 (FILS…LEQV), 287-307 (LWVW…ALVG), 326-346 (GYSV…IPIC), 361-381 (IVGG…VGAI), 400-420 (ELVM…LHPF), 433-455 (LVGL…WSWW), 456-476 (SVLP…WAVG), 499-519 (FYGS…MRFS), and 521-541 (AVLY…LLSI).

This sequence belongs to the major facilitator superfamily. MFSD6 family.

The protein resides in the membrane. The sequence is that of Major facilitator superfamily domain-containing protein 6-like (MFSD6L) from Homo sapiens (Human).